We begin with the raw amino-acid sequence, 254 residues long: MTVEERSNTAKVDILGVDFDNTTMLQMVENIKTFFANQSTNNLFIVTANPEIVNYATTHQAYLELINQASYIVADGTGVVKASHRLKQPLAHRIPGIELMDECLKIAHVNHQKVFLLGATNEVVEAAQYALQQRYPNISFAHHHGYIDLEDETVVKRIKLFKPDYIFVGMGFPKQEEWIMTHENQFESTVMMGVGGSLEVFAGAKKRAPYIFRKLNIEWIYRALIDWKRIGRLKSIPIFMYKIAKAKRKIKKAK.

This sequence belongs to the glycosyltransferase 26 family. TagA/TarA subfamily.

The enzyme catalyses UDP-N-acetyl-alpha-D-mannosamine + N-acetyl-alpha-D-glucosaminyl-di-trans,octa-cis-undecaprenyl diphosphate = N-acetyl-beta-D-mannosaminyl-(1-&gt;4)-N-acetyl-alpha-D-glucosaminyl di-trans,octa-cis-undecaprenyl diphosphate + UDP + H(+). The protein operates within cell wall biogenesis; poly(ribitol phosphate) teichoic acid biosynthesis. Its function is as follows. Catalyzes the conversion of GlcNAc-PP-undecaprenol into ManNAc-GlcNAc-PP-undecaprenol, the first committed lipid intermediate in the de novo synthesis of teichoic acid. The polypeptide is N-acetylglucosaminyldiphosphoundecaprenol N-acetyl-beta-D-mannosaminyltransferase (Staphylococcus aureus (strain NCTC 8325 / PS 47)).